The primary structure comprises 491 residues: Transmembrane protein 39B (491 aa).

Residues methionine 1–leucine 56 are disordered. Residues asparagine 9, asparagine 20, asparagine 29, and asparagine 45 are each glycosylated (N-linked (GlcNAc...) asparagine). Polar residues-rich tracts occupy residues asparagine 9 to valine 36 and arginine 44 to leucine 56. 8 consecutive transmembrane segments (helical) span residues leucine 79–isoleucine 99, threonine 115–alanine 135, leucine 152–glycine 172, threonine 185–phenylalanine 205, glutamate 290–valine 310, cysteine 322–proline 342, isoleucine 423–methionine 443, and histidine 449–leucine 469.

The protein belongs to the TMEM39 family. In terms of tissue distribution, expressed in the ovary, followed by the intestine and brain.

It localises to the endoplasmic reticulum membrane. Functionally, may protect the cells against DNA damage caused by exposure to the cold-warming stress and facilitates tissue damage repair during the recovery phase. This is Transmembrane protein 39B from Danio rerio (Zebrafish).